Reading from the N-terminus, the 230-residue chain is Ribonuclease 3 (230 aa).

The 121-residue stretch at 5–125 (YSRFYNILGY…VIGAIYLDSD (121 aa)) folds into the RNase III domain. Position 40 (E40) interacts with Mg(2+). Residue D44 is part of the active site. D111 and E114 together coordinate Mg(2+). The active site involves E114. The DRBM domain occupies 153 to 223 (DSKSKLQEIL…AEKMIEMLSQ (71 aa)).

It belongs to the ribonuclease III family. Homodimer. Requires Mg(2+) as cofactor.

Its subcellular location is the cytoplasm. The catalysed reaction is Endonucleolytic cleavage to 5'-phosphomonoester.. Functionally, digests double-stranded RNA. Involved in the processing of primary rRNA transcript to yield the immediate precursors to the large and small rRNAs (23S and 16S). Also processes some mRNAs, and tRNAs when they are encoded in the rRNA operon. CRISPR (clustered regularly interspaced short palindromic repeat) is an adaptive immune system that provides protection against mobile genetic elements (viruses, transposable elements and conjugative plasmids). CRISPR clusters contain spacers, sequences complementary to antecedent mobile elements, and target invading nucleic acids. CRISPR clusters are transcribed and processed into CRISPR RNA (crRNA). In this organism endogenous ribonuclease 3 and Cas9 are required for correct coprocessing of pre-crRNA and the trans-encoded small RNA (tracrRNA). Cas9, crRNA and tracrRNA are required for cleavage of invading DNA. Complements pre-crRNA and tracrRNA coprocessing defects in an rnc deletion in S.pyogenes strain 370. This is Ribonuclease 3 from Francisella tularensis subsp. novicida (strain U112).